An 86-amino-acid polypeptide reads, in one-letter code: Conotoxin Lt15a (86 aa).

An N-terminal signal peptide occupies residues 1–23 (MEKLTILILVATVLLAIQVLVQS). Residues 24–49 (DGENPVKGRVKHYAAKRFSALFRGPR) constitute a propeptide that is removed on maturation.

The protein belongs to the conotoxin O2 superfamily. Contains 4 disulfide bonds. In terms of tissue distribution, expressed by the venom duct.

The protein resides in the secreted. The sequence is that of Conotoxin Lt15a from Conus litteratus (Lettered cone).